We begin with the raw amino-acid sequence, 230 residues long: Endonuclease NucS (230 aa).

The protein belongs to the NucS endonuclease family.

Its subcellular location is the cytoplasm. Functionally, cleaves both 3' and 5' ssDNA extremities of branched DNA structures. This is Endonuclease NucS from Corynebacterium glutamicum (strain ATCC 13032 / DSM 20300 / JCM 1318 / BCRC 11384 / CCUG 27702 / LMG 3730 / NBRC 12168 / NCIMB 10025 / NRRL B-2784 / 534).